A 491-amino-acid polypeptide reads, in one-letter code: Acetyl-coenzyme A carboxylase carboxyl transferase subunit beta, chloroplastic (491 aa).

Residues 28 to 56 (LGPIENTSESEDPNRNDMKKNSHSWGSRD) are disordered. In terms of domain architecture, CoA carboxyltransferase N-terminal spans 223 to 491 (LWVQCENCYG…FPLNKNSIEH (269 aa)). Residues Cys227, Cys230, Cys246, and Cys249 each coordinate Zn(2+). A C4-type zinc finger spans residues 227–249 (CENCYGLNYKKILKSKMNLCEQC).

This sequence belongs to the AccD/PCCB family. Acetyl-CoA carboxylase is a heterohexamer composed of biotin carboxyl carrier protein, biotin carboxylase and 2 subunits each of ACCase subunit alpha and ACCase plastid-coded subunit beta (accD). Zn(2+) serves as cofactor.

It is found in the plastid. It localises to the chloroplast stroma. The catalysed reaction is N(6)-carboxybiotinyl-L-lysyl-[protein] + acetyl-CoA = N(6)-biotinyl-L-lysyl-[protein] + malonyl-CoA. Its pathway is lipid metabolism; malonyl-CoA biosynthesis; malonyl-CoA from acetyl-CoA: step 1/1. Its function is as follows. Component of the acetyl coenzyme A carboxylase (ACC) complex. Biotin carboxylase (BC) catalyzes the carboxylation of biotin on its carrier protein (BCCP) and then the CO(2) group is transferred by the transcarboxylase to acetyl-CoA to form malonyl-CoA. This chain is Acetyl-coenzyme A carboxylase carboxyl transferase subunit beta, chloroplastic, found in Daucus carota (Wild carrot).